A 369-amino-acid polypeptide reads, in one-letter code: Anhydro-N-acetylmuramic acid kinase (369 aa).

12-19 (GTSLDGVD) is an ATP binding site.

Belongs to the anhydro-N-acetylmuramic acid kinase family.

It catalyses the reaction 1,6-anhydro-N-acetyl-beta-muramate + ATP + H2O = N-acetyl-D-muramate 6-phosphate + ADP + H(+). It participates in amino-sugar metabolism; 1,6-anhydro-N-acetylmuramate degradation. The protein operates within cell wall biogenesis; peptidoglycan recycling. Catalyzes the specific phosphorylation of 1,6-anhydro-N-acetylmuramic acid (anhMurNAc) with the simultaneous cleavage of the 1,6-anhydro ring, generating MurNAc-6-P. Is required for the utilization of anhMurNAc either imported from the medium or derived from its own cell wall murein, and thus plays a role in cell wall recycling. The sequence is that of Anhydro-N-acetylmuramic acid kinase from Actinobacillus pleuropneumoniae serotype 5b (strain L20).